The chain runs to 506 residues: Galactose/methyl galactoside import ATP-binding protein MglA (506 aa).

ABC transporter domains lie at Leu-14–Ser-249 and Val-264–Leu-506. Gly-46–Ser-53 serves as a coordination point for ATP.

The protein belongs to the ABC transporter superfamily. Galactose/methyl galactoside importer (TC 3.A.1.2.3) family. As to quaternary structure, the complex is composed of one ATP-binding protein (MglA), two transmembrane proteins (MglC) and a solute-binding protein (MglB).

The protein resides in the cell inner membrane. It catalyses the reaction D-galactose(out) + ATP + H2O = D-galactose(in) + ADP + phosphate + H(+). It carries out the reaction methyl beta-D-galactoside(out) + ATP + H2O = methyl beta-D-galactoside(in) + ADP + phosphate + H(+). Its function is as follows. Part of the ABC transporter complex MglABC involved in galactose/methyl galactoside import. Responsible for energy coupling to the transport system. This Shigella boydii serotype 4 (strain Sb227) protein is Galactose/methyl galactoside import ATP-binding protein MglA.